We begin with the raw amino-acid sequence, 109 residues long: U4-lycotoxin-Ls1b (109 aa).

An N-terminal signal peptide occupies residues 1 to 22 (MKVLVLFSVLFLTLFSYSSTEA). A propeptide spanning residues 23–44 (IDEFDSDAEDDMLSLMANEQVR) is cleaved from the precursor. The tract at residues 45–88 (AKACTPRLHDCSHDRHSCCRGELSKDVCYCFYPEGEDKTEVCSC) is knottin domain. Cystine bridges form between Cys48-Cys63, Cys55-Cys72, Cys62-Cys88, and Cys74-Cys86. Positions 89 to 108 (QQPKSHKYIEKVVDKAKTVV) are linear cationic cytotoxin domain.

This sequence belongs to the neurotoxin 19 (CSTX) family. 05 (U4-Lctx) subfamily. Expressed by the venom gland.

The protein resides in the secreted. Enhances the high-affinity desensitization of human P2RX3 purinoceptors. The chain is U4-lycotoxin-Ls1b from Lycosa singoriensis (Wolf spider).